A 248-amino-acid chain; its full sequence is 5'-nucleotidase SurE (248 aa).

A divalent metal cation contacts are provided by Asp-8, Asp-9, Ser-39, and Asn-92.

It belongs to the SurE nucleotidase family. It depends on a divalent metal cation as a cofactor.

The protein localises to the cytoplasm. It carries out the reaction a ribonucleoside 5'-phosphate + H2O = a ribonucleoside + phosphate. Nucleotidase that shows phosphatase activity on nucleoside 5'-monophosphates. The chain is 5'-nucleotidase SurE from Tolumonas auensis (strain DSM 9187 / NBRC 110442 / TA 4).